Consider the following 517-residue polypeptide: GMP synthase [glutamine-hydrolyzing] (517 aa).

Positions 11 to 202 constitute a Glutamine amidotransferase type-1 domain; sequence KIIVLDFGSQ…AFKVCGAKAN (192 aa). The active-site Nucleophile is the C88. Active-site residues include H176 and E178. The region spanning 203–392 is the GMPS ATP-PPase domain; that stretch reads WTMDDFIEMQ…LGIPHDLVWR (190 aa). Residue 230 to 236 coordinates ATP; it reads SGGVDSS.

In terms of assembly, homodimer.

It catalyses the reaction XMP + L-glutamine + ATP + H2O = GMP + L-glutamate + AMP + diphosphate + 2 H(+). The protein operates within purine metabolism; GMP biosynthesis; GMP from XMP (L-Gln route): step 1/1. Its function is as follows. Catalyzes the synthesis of GMP from XMP. This Lactobacillus johnsonii (strain CNCM I-12250 / La1 / NCC 533) protein is GMP synthase [glutamine-hydrolyzing].